The following is a 1085-amino-acid chain: Ankyrin repeat and IBR domain-containing protein 1 (1085 aa).

Gly-2 carries the N-myristoyl glycine lipid modification. ANK repeat units follow at residues 45–75 and 145–174; these read QHNT…NPNK and KKNT…DLFA. A disordered region spans residues 282-322; that stretch reads CQRSGVQMPTPPPSGYNAWDTLPSPRTPRTTRSSVTSPDEI. The span at 304 to 319 shows a compositional bias: low complexity; it reads PSPRTPRTTRSSVTSP. The interval 330 to 570 is TRIAD supradomain; it reads DTSLCDICMC…GGYYRCTRYE (241 aa). Zn(2+)-binding residues include Cys-334, Cys-337, Cys-352, His-354, Cys-357, Cys-360, Cys-379, Cys-384, Cys-466, Cys-469, His-474, Cys-479, Cys-520, and Cys-523. The RING-type 1 zinc-finger motif lies at 334–384; it reads CDICMCSISVFEDPVDMPCGHDFCRGCWEAFLNLKIQEGEAHNIFCPAYEC. The IBR-type zinc-finger motif lies at 402-479; that stretch reads DKRYLQFDIK…LGEAHEPCDC (78 aa). The segment at 520–549 adopts an RING-type 2; atypical zinc-finger fold; the sequence is CANCKSPIQKNEGCNHMQCAKCKYDFCWIC. The active site involves Cys-533. Zn(2+) is bound by residues Cys-538, Cys-541, Cys-546, Cys-549, His-556, and Cys-566. Positions 576–641 form a coiled coil; it reads EEQSKEMTVE…RALKETEGGC (66 aa). Ser-738 carries the phosphoserine modification. The interval 764-808 is disordered; it reads RRRHRQQRRRGDVHSLLSNPTDLDEPSESTFDLPEGSSGRRPGAS. Residues 846 to 865 enclose the UIM domain; it reads EDDPNILLAIQLSLQESGLD. Phosphoserine occurs at positions 879 and 906. Disordered stretches follow at residues 884–907, 921–959, and 1014–1085; these read GSSL…ALSS, GADS…QDPS, and PPED…VHSV. A compositionally biased stretch (polar residues) spans 926-959; the sequence is PFSTDTLSSRPLSETRSDFCPSSSDLDSAGQDPS. Residues 1018–1033 show a composition bias toward basic and acidic residues; it reads SVSKDTGVHEGERAQM. Positions 1068–1085 are enriched in polar residues; it reads ASQTPQTSSDWLEQVHSV.

It belongs to the RBR family.

The enzyme catalyses [E2 ubiquitin-conjugating enzyme]-S-ubiquitinyl-L-cysteine + [acceptor protein]-L-lysine = [E2 ubiquitin-conjugating enzyme]-L-cysteine + [acceptor protein]-N(6)-ubiquitinyl-L-lysine.. In terms of biological role, might act as an E3 ubiquitin-protein ligase, or as part of E3 complex, which accepts ubiquitin from specific E2 ubiquitin-conjugating enzymes and then transfers it to substrates. The polypeptide is Ankyrin repeat and IBR domain-containing protein 1 (Ankib1) (Mus musculus (Mouse)).